A 329-amino-acid polypeptide reads, in one-letter code: ADP-L-glycero-D-manno-heptose-6-epimerase (329 aa).

NADP(+)-binding positions include 10 to 11 (FI), 31 to 32 (DD), lysine 38, lysine 53, 74 to 78 (QGACS), and asparagine 91. Catalysis depends on tyrosine 138, which acts as the Proton acceptor. NADP(+) is bound at residue lysine 142. Asparagine 167 is a substrate binding site. Residues valine 168 and lysine 176 each contribute to the NADP(+) site. Residue lysine 176 is the Proton acceptor of the active site. Residues arginine 178, histidine 185, 199–202 (FAGW), arginine 212, and tyrosine 291 each bind substrate.

It belongs to the NAD(P)-dependent epimerase/dehydratase family. HldD subfamily. As to quaternary structure, homopentamer. The cofactor is NADP(+).

It carries out the reaction ADP-D-glycero-beta-D-manno-heptose = ADP-L-glycero-beta-D-manno-heptose. It participates in nucleotide-sugar biosynthesis; ADP-L-glycero-beta-D-manno-heptose biosynthesis; ADP-L-glycero-beta-D-manno-heptose from D-glycero-beta-D-manno-heptose 7-phosphate: step 4/4. It functions in the pathway bacterial outer membrane biogenesis; LPS core biosynthesis. In terms of biological role, catalyzes the interconversion between ADP-D-glycero-beta-D-manno-heptose and ADP-L-glycero-beta-D-manno-heptose via an epimerization at carbon 6 of the heptose. In Bordetella pertussis (strain Tohama I / ATCC BAA-589 / NCTC 13251), this protein is ADP-L-glycero-D-manno-heptose-6-epimerase.